The following is a 203-amino-acid chain: Small ribosomal subunit protein eS1 (203 aa).

The protein belongs to the eukaryotic ribosomal protein eS1 family.

The sequence is that of Small ribosomal subunit protein eS1 from Methanosarcina acetivorans (strain ATCC 35395 / DSM 2834 / JCM 12185 / C2A).